The chain runs to 117 residues: Ribonuclease P protein component (117 aa).

The protein belongs to the RnpA family. As to quaternary structure, consists of a catalytic RNA component (M1 or rnpB) and a protein subunit.

The enzyme catalyses Endonucleolytic cleavage of RNA, removing 5'-extranucleotides from tRNA precursor.. In terms of biological role, RNaseP catalyzes the removal of the 5'-leader sequence from pre-tRNA to produce the mature 5'-terminus. It can also cleave other RNA substrates such as 4.5S RNA. The protein component plays an auxiliary but essential role in vivo by binding to the 5'-leader sequence and broadening the substrate specificity of the ribozyme. This Lactococcus lactis subsp. lactis (strain IL1403) (Streptococcus lactis) protein is Ribonuclease P protein component.